The primary structure comprises 101 residues: Small ribosomal subunit protein uS14 (101 aa).

This sequence belongs to the universal ribosomal protein uS14 family. In terms of assembly, part of the 30S ribosomal subunit. Contacts proteins S3 and S10.

Functionally, binds 16S rRNA, required for the assembly of 30S particles and may also be responsible for determining the conformation of the 16S rRNA at the A site. The sequence is that of Small ribosomal subunit protein uS14 from Actinobacillus succinogenes (strain ATCC 55618 / DSM 22257 / CCUG 43843 / 130Z).